The following is a 284-amino-acid chain: Pantothenate synthetase (284 aa).

ATP is bound at residue 30-37 (MGNLHQGH). His-37 functions as the Proton donor in the catalytic mechanism. Gln-61 provides a ligand contact to (R)-pantoate. Gln-61 provides a ligand contact to beta-alanine. 149-152 (GQKD) lines the ATP pocket. Gln-155 lines the (R)-pantoate pocket. Residues Val-178 and 186 to 189 (LSSR) contribute to the ATP site.

This sequence belongs to the pantothenate synthetase family. As to quaternary structure, homodimer.

It is found in the cytoplasm. The enzyme catalyses (R)-pantoate + beta-alanine + ATP = (R)-pantothenate + AMP + diphosphate + H(+). It participates in cofactor biosynthesis; (R)-pantothenate biosynthesis; (R)-pantothenate from (R)-pantoate and beta-alanine: step 1/1. In terms of biological role, catalyzes the condensation of pantoate with beta-alanine in an ATP-dependent reaction via a pantoyl-adenylate intermediate. This is Pantothenate synthetase from Aeromonas salmonicida (strain A449).